The primary structure comprises 103 residues: Large ribosomal subunit protein uL24 (103 aa).

This sequence belongs to the universal ribosomal protein uL24 family. As to quaternary structure, part of the 50S ribosomal subunit.

One of two assembly initiator proteins, it binds directly to the 5'-end of the 23S rRNA, where it nucleates assembly of the 50S subunit. Functionally, one of the proteins that surrounds the polypeptide exit tunnel on the outside of the subunit. The protein is Large ribosomal subunit protein uL24 (rplX) of Bacillus spizizenii (strain ATCC 23059 / NRRL B-14472 / W23) (Bacillus subtilis subsp. spizizenii).